Reading from the N-terminus, the 274-residue chain is 4-diphosphocytidyl-2-C-methyl-D-erythritol kinase (274 aa).

The active site involves Lys10. Residue 101 to 111 (PTQAGLGGGSA) participates in ATP binding. Residue Asp143 is part of the active site.

The protein belongs to the GHMP kinase family. IspE subfamily.

The catalysed reaction is 4-CDP-2-C-methyl-D-erythritol + ATP = 4-CDP-2-C-methyl-D-erythritol 2-phosphate + ADP + H(+). Its pathway is isoprenoid biosynthesis; isopentenyl diphosphate biosynthesis via DXP pathway; isopentenyl diphosphate from 1-deoxy-D-xylulose 5-phosphate: step 3/6. Catalyzes the phosphorylation of the position 2 hydroxy group of 4-diphosphocytidyl-2C-methyl-D-erythritol. In Helicobacter pylori (strain HPAG1), this protein is 4-diphosphocytidyl-2-C-methyl-D-erythritol kinase.